The chain runs to 470 residues: Putative multidrug resistance protein MdtD (470 aa).

Residues 1–11 (MTELPDNTRWQ) lie on the Periplasmic side of the membrane. A helical transmembrane segment spans residues 12 to 32 (LWIVALGFFMQSLDTTIVNTA). Topologically, residues 33–48 (LPSMAKSLGESPLHMH) are cytoplasmic. A helical transmembrane segment spans residues 49-69 (MVVVSYVLTVAVMLPASGWLA). The Periplasmic portion of the chain corresponds to 70 to 76 (DKIGVRN). Residues 77 to 97 (IFFAAIVLFTLGSLFCALSGT) form a helical membrane-spanning segment. Over 98–101 (LNQL) the chain is Cytoplasmic. The helical transmembrane segment at 102 to 124 (VLARVLQGVGGAMMVPVGRLTVM) threads the bilayer. Over 125 to 137 (KIVPRAQYMAAMT) the chain is Periplasmic. A helical membrane pass occupies residues 138–158 (FVTLPGQIGPLLGPALGGVLV). Residues 159–164 (EYASWH) lie on the Cytoplasmic side of the membrane. A helical transmembrane segment spans residues 165 to 185 (WIFLINIPVGIVGAMATFMLM). Over 186 to 196 (PNYTIETRRFD) the chain is Periplasmic. Residues 197 to 217 (LPGFLLLAIGMAVLTLALDGS) traverse the membrane as a helical segment. Residues 218-221 (KSMG) are Cytoplasmic-facing. Residues 222–242 (ISPWTLAGLAAGGAAAILLYL) form a helical membrane-spanning segment. Residues 243-262 (LHAKKNSGALFSLRLFRTPT) are Periplasmic-facing. A helical transmembrane segment spans residues 263-283 (FSLGLLGSFAGRIGSGMLPFM). Residues 284–285 (TP) lie on the Cytoplasmic side of the membrane. A helical transmembrane segment spans residues 286–306 (VFLQIGLGFSPFHAGLMMIPM). Topologically, residues 307 to 341 (VLGSMGMKRIVVQIVNRFGYRRVLVATTLGLALVS) are periplasmic. A helical membrane pass occupies residues 342–362 (LLFMSVALLGWYYLLPLVLLL). At 363–395 (QGMVNSARFSSMNTLTLKDLPDTLASSGNSLLS) the chain is on the cytoplasmic side. Residues 396–416 (MIMQLSMSIGVTIAGMLLGMF) form a helical membrane-spanning segment. The Periplasmic segment spans residues 417-430 (GQQHIGIDSSATHH). The chain crosses the membrane as a helical span at residues 431–451 (VFMYTWLCMAVIIALPAIIFA). Topologically, residues 452–470 (RVPNDTQQNMVISRRKRSL) are cytoplasmic.

The protein belongs to the major facilitator superfamily. TCR/Tet family.

The protein resides in the cell inner membrane. This Salmonella heidelberg (strain SL476) protein is Putative multidrug resistance protein MdtD.